A 691-amino-acid chain; its full sequence is Elongation factor G (691 aa).

The 275-residue stretch at 8–282 (ERVRNIGIAA…AVVDYLPAPV (275 aa)) folds into the tr-type G domain. Residues 17-24 (AHIDAGKT), 81-85 (DTPGH), and 135-138 (NKMD) each bind GTP.

It belongs to the TRAFAC class translation factor GTPase superfamily. Classic translation factor GTPase family. EF-G/EF-2 subfamily.

The protein resides in the cytoplasm. Its function is as follows. Catalyzes the GTP-dependent ribosomal translocation step during translation elongation. During this step, the ribosome changes from the pre-translocational (PRE) to the post-translocational (POST) state as the newly formed A-site-bound peptidyl-tRNA and P-site-bound deacylated tRNA move to the P and E sites, respectively. Catalyzes the coordinated movement of the two tRNA molecules, the mRNA and conformational changes in the ribosome. The polypeptide is Elongation factor G (Prochlorococcus marinus (strain MIT 9312)).